A 446-amino-acid chain; its full sequence is Phosphoglucosamine mutase (446 aa).

Serine 99 acts as the Phosphoserine intermediate in catalysis. Residues serine 99, aspartate 242, aspartate 244, and aspartate 246 each coordinate Mg(2+). Residue serine 99 is modified to Phosphoserine.

This sequence belongs to the phosphohexose mutase family. The cofactor is Mg(2+). Activated by phosphorylation.

The enzyme catalyses alpha-D-glucosamine 1-phosphate = D-glucosamine 6-phosphate. In terms of biological role, catalyzes the conversion of glucosamine-6-phosphate to glucosamine-1-phosphate. This is Phosphoglucosamine mutase from Campylobacter curvus (strain 525.92).